Here is a 145-residue protein sequence, read N- to C-terminus: Histone H3-like centromeric protein A (145 aa).

Residues 1-19 show a composition bias toward basic residues; the sequence is MPRHTSAHKRKPSTPRRRS. Residues 1–54 are disordered; sequence MPRHTSAHKRKPSTPRRRSPPASLPPPAGSRTRRHSGPSGSSPRKKHKFRPGTR. Residue Ser-19 is modified to Phosphoserine. An H3-like region spans residues 51 to 145; that stretch reads PGTRALMEIR…ARRIRGVEHM (95 aa).

Belongs to the histone H3 family. In terms of assembly, component of centromeric nucleosomes, where DNA is wrapped around a histone octamer core. The octamer contains two molecules each of H2A, H2B, CENPA and H4 assembled in one CENPA-H4 heterotetramer and two H2A-H2B heterodimers. CENPA modulates the DNA-binding characteristics of nucleosomes so that protruding DNA ends have higher flexibility than in nucleosomes containing conventional histone H3.

Its subcellular location is the nucleus. The protein resides in the chromosome. The protein localises to the centromere. In terms of biological role, histone H3-like nucleosomal protein that is specifically found in centromeric nucleosomes. Replaces conventional H3 in the nucleosome core of centromeric chromatin that serves as an assembly site for the inner kinetochore. The presence of CENPA subtly modifies the nucleosome structure and the way DNA is wrapped around the nucleosome and gives rise to protruding DNA ends that are less well-ordered and rigid compared to nucleosomes containing histone H3. May serve as an epigenetic mark that propagates centromere identity through replication and cell division. Required for recruitment and assembly of kinetochore proteins, and as a consequence required for progress through mitosis, chromosome segregation and cytokinesis. The polypeptide is Histone H3-like centromeric protein A (cenpa) (Danio rerio (Zebrafish)).